Consider the following 278-residue polypeptide: MITSRVLRFPRKPFVDLDYSRHMPAAYVERTKRTVPRKVFGDRFGAPDIKMYYVHPDDYLPSHRRPWEDKQLSSHLQRSDKYFSAQLSNKYFELRRPKSERMPDTEWTFFPGDLVQVMVGKDKGRQGLVLTISRDSSEVVVDGLHTRLGEDMEGSEKLGVDKTLRWQEQPLSVSKKQVMLVDPNDENPCEARWQLNASADEYIRVSTRSGYEIPIPSQAKVTYEYLQPENYIEVEGKDTPSDAVLERTYMPRVASFEQEIMEEMGIKEDRTPKPTFWY.

The region spanning 109-142 (FFPGDLVQVMVGKDKGRQGLVLTISRDSSEVVVD) is the KOW domain.

This sequence belongs to the universal ribosomal protein uL24 family.

It is found in the mitochondrion. The sequence is that of Large ribosomal subunit protein uL24m (mrpl-24) from Caenorhabditis briggsae.